Here is a 124-residue protein sequence, read N- to C-terminus: Small ribosomal subunit protein uS12 (124 aa).

Residue Asp89 is modified to 3-methylthioaspartic acid. The disordered stretch occupies residues 104-124 (ALGVEDRKRGRSKYGAKRPKA). Basic residues predominate over residues 112-124 (RGRSKYGAKRPKA).

This sequence belongs to the universal ribosomal protein uS12 family. As to quaternary structure, part of the 30S ribosomal subunit. Contacts proteins S8 and S17. May interact with IF1 in the 30S initiation complex.

In terms of biological role, with S4 and S5 plays an important role in translational accuracy. Interacts with and stabilizes bases of the 16S rRNA that are involved in tRNA selection in the A site and with the mRNA backbone. Located at the interface of the 30S and 50S subunits, it traverses the body of the 30S subunit contacting proteins on the other side and probably holding the rRNA structure together. The combined cluster of proteins S8, S12 and S17 appears to hold together the shoulder and platform of the 30S subunit. The sequence is that of Small ribosomal subunit protein uS12 from Treponema denticola (strain ATCC 35405 / DSM 14222 / CIP 103919 / JCM 8153 / KCTC 15104).